Reading from the N-terminus, the 402-residue chain is Putative F-box protein At3g23960 (402 aa).

Residues 1–23 (MRSRQLHNVSEDRETLSRRNKRS) form a disordered region. The region spanning 26–73 (SLNGHIPIDLLIEIFLKLPVKSIATCRSVSKFWTYVLGRQDFTELFLT) is the F-box domain.

The chain is Putative F-box protein At3g23960 from Arabidopsis thaliana (Mouse-ear cress).